Consider the following 177-residue polypeptide: Prorelaxin (177 aa).

Positions 1-22 (MSCKFVLQLLGFWLLLSQPCRA) are cleaved as a signal peptide. Intrachain disulfides connect C36/C164, C48/C177, and C163/C168. Residues 64–149 (MTEEAVSSFI…LKSLYLDTLS (86 aa)) constitute a propeptide, connecting peptide. Residues 80–114 (FDTMPNLSEKPKTALPEGHPSLPEQQQYVPVSSDS) form a disordered region. Positions 102 to 114 (PEQQQYVPVSSDS) are enriched in polar residues.

This sequence belongs to the insulin family. In terms of assembly, heterodimer of a B chain and an A chain linked by two disulfide bonds.

It is found in the secreted. Relaxin is an ovarian hormone that acts with estrogen to produce dilatation of the birth canal in many mammals. It bears mature young, and allows separation of the pelvic bones. The chain is Prorelaxin (RLN) from Mesocricetus auratus (Golden hamster).